The chain runs to 260 residues: MKPATTSWADEVNADYVDGLPPSKEIIDGDYKHITQYKFNDEGKKIKVVRSFKVERKIVSRAVAKRRTWTKFGDSRQDMPGPNSYTTKVADDILMNYIGSKDFEHAHDHLDGNKPMAKCRICNGDHWSVKCPYKGTSMDIESKAIAAATAAAVGDTNKSGKYVPPFLKDGAKGRERDDSCAVRISNLSESMTEDDLEELVKKIGPFTKMYLAREKTSGLCKGFAYVHFKYRKDAAEAVEVLNGHGYDHLILSVEWSKPQN.

In terms of domain architecture, RRM spans 180–258 (CAVRISNLSE…LILSVEWSKP (79 aa)).

Belongs to the eIF-3 subunit G family. Component of the eukaryotic translation initiation factor 3 (eIF-3) complex. The eIF-3 complex interacts with pix.

The protein localises to the cytoplasm. Functionally, RNA-binding component of the eukaryotic translation initiation factor 3 (eIF-3) complex, which is involved in protein synthesis of a specialized repertoire of mRNAs and, together with other initiation factors, stimulates binding of mRNA and methionyl-tRNAi to the 40S ribosome. The eIF-3 complex specifically targets and initiates translation of a subset of mRNAs involved in cell proliferation. This subunit can bind 18S rRNA. The sequence is that of Eukaryotic translation initiation factor 3 subunit G-2 from Drosophila grimshawi (Hawaiian fruit fly).